The sequence spans 26 residues: Thrombopoietin (26 aa).

The protein belongs to the EPO/TPO family.

It localises to the secreted. In terms of biological role, lineage-specific cytokine affecting the proliferation and maturation of megakaryocytes from their committed progenitor cells. It acts at a late stage of megakaryocyte development. It may be the major physiological regulator of circulating platelets. In Sus scrofa (Pig), this protein is Thrombopoietin (THPO).